We begin with the raw amino-acid sequence, 166 residues long: Regulatory protein RecX (166 aa).

It belongs to the RecX family.

Its subcellular location is the cytoplasm. In terms of biological role, modulates RecA activity. This chain is Regulatory protein RecX, found in Shigella sonnei (strain Ss046).